A 361-amino-acid polypeptide reads, in one-letter code: MSIDQRLQLITRNAAEIITIDELRKKLESEEKLKGYIGFEPSGLFHIGWLIWTQKVKDLVEAGVNMTLLRATWHAWINDKLGGDLSLIKMAADYTVEVIKNYGVDTTKLNIVDADDMVKEKDYWALVIKVAKNASLARIKRALTIMGRRAEEAEIDASKLIYPAMQVSDIFYLDLDIALGGTDQRKAHMLARDVAEKMGKKKIVSIHTPLLVGLQGGQRMSITEGMEEDDIQAEIKMSKSKPESAIFVSDSREDVERKIMGAYCPKGVAENNPILQILKYIIFPRYNFVKIERDIRYGGDVEFKDYEELERAYIEGKIHPMDLKKATARRLNEILEPIRKSLERKPEFEEMIQKISKSVTR.

Residues Tyr-36, Tyr-162, Gln-166, Asp-169, and Gln-184 each contribute to the L-tyrosine site. The 'KMSKS' region motif lies at 236 to 240 (KMSKS). Lys-239 contributes to the ATP binding site.

This sequence belongs to the class-I aminoacyl-tRNA synthetase family. TyrS type 4 subfamily. In terms of assembly, homodimer.

It localises to the cytoplasm. It catalyses the reaction tRNA(Tyr) + L-tyrosine + ATP = L-tyrosyl-tRNA(Tyr) + AMP + diphosphate + H(+). Functionally, catalyzes the attachment of tyrosine to tRNA(Tyr) in a two-step reaction: tyrosine is first activated by ATP to form Tyr-AMP and then transferred to the acceptor end of tRNA(Tyr). The polypeptide is Tyrosine--tRNA ligase (Saccharolobus islandicus (strain L.S.2.15 / Lassen #1) (Sulfolobus islandicus)).